A 133-amino-acid chain; its full sequence is Adenosine 5'-monophosphoramidase hnt1 (133 aa).

Residues 4-107 (IFCKIVKGDI…IPKPNEEYGL (104 aa)) form the HIT domain. AMP is bound by residues 29-30 (DI), N81, 87-89 (HQF), and 94-96 (HFH). The short motif at 92 to 96 (HVHFH) is the Histidine triad motif element. H94 acts as the Tele-AMP-histidine intermediate in catalysis.

The protein belongs to the HINT family. Homodimer. It depends on Mg(2+) as a cofactor.

The protein localises to the nucleus. It carries out the reaction adenosine 5'-phosphoramidate + H2O = AMP + NH4(+). Its function is as follows. Hydrolyzes adenosine 5'-monophosphoramidate substrates such as AMP-morpholidate, AMP-N-alanine methyl ester, AMP-alpha-acetyl lysine methyl ester and AMP-NH2. The polypeptide is Adenosine 5'-monophosphoramidase hnt1 (hnt1) (Schizosaccharomyces pombe (strain 972 / ATCC 24843) (Fission yeast)).